The chain runs to 382 residues: G2/mitotic-specific cyclin-B2 (382 aa).

Over residues methionine 1–leucine 12 the composition is skewed to polar residues. Residues methionine 1 to isoleucine 78 are disordered. The segment covering asparagine 38 to arginine 47 has biased composition (low complexity).

The protein belongs to the cyclin family. Cyclin AB subfamily. Interacts with the CDK1 protein kinase to form a serine/threonine kinase holoenzyme complex also known as maturation promoting factor (MPF). The cyclin subunit imparts substrate specificity to the complex.

Essential for the control of the cell cycle at the G2/M (mitosis) transition. This is G2/mitotic-specific cyclin-B2 (ccnb2) from Oryzias javanicus (Javanese ricefish).